Here is a 148-residue protein sequence, read N- to C-terminus: Protein RESISTANCE TO POWDERY MILDEW 8.1 (148 aa).

The 148-residue stretch at 1-148 folds into the RPW8 domain; the sequence is MPIGELAIGA…VISACSKIRA (148 aa). The chain crosses the membrane as a helical span at residues 7 to 23; that stretch reads AIGAVLGVGAQAIYDRF. The stretch at 120 to 140 forms a coiled coil; sequence DDIKEIKAKISEMDTKLAEVI.

Belongs to the plant RPW8 protein family.

It localises to the membrane. In terms of biological role, disease resistance (R) protein that induces localized, salicylic acid-dependent defenses. Confers resistance to powdery mildew (e.g. Erysiphe cichoracearum UCSC1). This chain is Protein RESISTANCE TO POWDERY MILDEW 8.1, found in Arabidopsis thaliana (Mouse-ear cress).